The sequence spans 116 residues: Dynein light chain Tctex-type 3 (116 aa).

Residue Tyr-4 is modified to 3'-nitrotyrosine.

It belongs to the dynein light chain Tctex-type family. Homodimer. The cytoplasmic dynein 1 complex consists of two catalytic heavy chains (HCs) and a number of non-catalytic subunits presented by intermediate chains (ICs), light intermediate chains (LICs) and light chains (LCs); the composition seems to vary in respect to the IC, LIC and LC composition. The heavy chain homodimer serves as a scaffold for the probable homodimeric assembly of the respective non-catalytic subunits. The ICs and LICs bind directly to the HC dimer and the LCs assemble on the IC dimer. DYNLT1 and DYNLT3 compete for association with dynein IC (DYNC1I1 or DYNC1I2). Self-associates. Interacts with DYNC1I1 and DYNC1I2. Interacts with BUB3. Interacts with SATB1 in nucleus to form complex with matrix attachment regions (MARs) of DNA.

Its subcellular location is the nucleus. The protein localises to the cytoplasm. It is found in the cytoskeleton. The protein resides in the chromosome. It localises to the centromere. Its subcellular location is the kinetochore. Its function is as follows. Acts as one of several non-catalytic accessory components of the cytoplasmic dynein 1 complex that are thought to be involved in linking dynein to cargos and to adapter proteins that regulate dynein function. Cytoplasmic dynein 1 acts as a motor for the intracellular retrograde motility of vesicles and organelles along microtubules. Probably binds BUB3 as part of transport cargo. Required for the efficient progression through mitosis. The sequence is that of Dynein light chain Tctex-type 3 (DYNLT3) from Ovis aries (Sheep).